Reading from the N-terminus, the 1899-residue chain is Protocadherin-15 (1899 aa).

An N-terminal signal peptide occupies residues 1–26; the sequence is MLQQFCLWKWLAVGIAVATILASSLA. Residues 27 to 1376 lie on the Extracellular side of the membrane; sequence QNDEDCKLAR…AQAVGYTEGA (1350 aa). An intrachain disulfide couples cysteine 32 to cysteine 120. 11 consecutive Cadherin domains span residues 38 to 147, 148 to 265, 278 to 395, 396 to 509, 510 to 616, 617 to 717, 719 to 819, 820 to 926, 927 to 1035, 1037 to 1144, and 1145 to 1259; these read GPPA…SPQF, QQQR…GPMF, RPLT…KPYF, TKST…SPTF, SNIS…PPRF, PQLM…GPVF, MFLP…SPVF, TNAS…SPVF, SKTL…IPRF, QDEY…APVF, and TKKM…PPTL. Residues 1377-1397 form a helical membrane-spanning segment; that stretch reads LLALAVIIILCCMPAILIVMV. At 1398-1899 the chain is on the cytoplasmic side; that stretch reads SYRQRQAECA…KRFPSQSTAL (502 aa). Disordered regions lie at residues 1668-1687, 1700-1721, and 1734-1820; these read SPCLRSSPLSSPTPCEVVEP, HDYPEELSPPPTRKPTPPSFRI, and TKGE…RREL. 2 stretches are compositionally biased toward pro residues: residues 1706–1717 and 1743–1773; these read LSPPPTRKPTPP and PDPPKTPPPPPPLLPPPPPSPPLLPPHPPTL. Over residues 1774–1791 the composition is skewed to low complexity; that stretch reads PLASVPSSSSLPSTQHLS. Residues 1804-1814 show a composition bias toward pro residues; that stretch reads AVPPPAAVPEP.

As to expression, in the utricle, localizes to the distal region of the kinocilium and near the tips of the stereocilia.

Its subcellular location is the cell membrane. Functionally, calcium-dependent cell-adhesion protein. Required for inner ear neuroepithelial cell elaboration and cochlear function. Probably involved in the maintenance of normal retinal function. In Gallus gallus (Chicken), this protein is Protocadherin-15 (Pcdh15).